Consider the following 787-residue polypeptide: DNA ligase (787 aa).

NAD(+) contacts are provided by residues 32-36 (DVEYD), 81-82 (SL), and Glu121. Lys123 functions as the N6-AMP-lysine intermediate in the catalytic mechanism. NAD(+) is bound by residues Arg144, Glu181, Lys297, and Lys321. 4 residues coordinate Zn(2+): Cys415, Cys418, Cys445, and Cys451. The BRCT domain maps to 703–787 (VEGLPLAGQT…RLIELGVAVD (85 aa)).

This sequence belongs to the NAD-dependent DNA ligase family. LigA subfamily. Mg(2+) is required as a cofactor. Requires Mn(2+) as cofactor.

It catalyses the reaction NAD(+) + (deoxyribonucleotide)n-3'-hydroxyl + 5'-phospho-(deoxyribonucleotide)m = (deoxyribonucleotide)n+m + AMP + beta-nicotinamide D-nucleotide.. DNA ligase that catalyzes the formation of phosphodiester linkages between 5'-phosphoryl and 3'-hydroxyl groups in double-stranded DNA using NAD as a coenzyme and as the energy source for the reaction. It is essential for DNA replication and repair of damaged DNA. The sequence is that of DNA ligase from Pseudomonas syringae pv. syringae (strain B728a).